The following is an 848-amino-acid chain: MNLESTATSAEYWSDLADALNTPMMKQFLAIKKDFPDTILFFRMGDFYEMFLEDAKIASSILDIALTKRQNAVPMCGIPYHSKDNYISRLLNAGKKIAICEQSKPEEAGSKLMTRDVVRIITPGTVIEENLLSGFQNNYLAVLHLKKSLIYFAIADFSTGEVFYSSVSVTGLERLIAELEKFKPSEICVPKSEHTFFQELEYFKNREFTVLKNQIETSEKDSFQVLSKYLNEYIRETYRDNKLVLREPKILSSGKFLEMDRETIRNLELVENEKEKNNTLYSIFNFCNTAKGKRLLKQRILFPECDPVVLYSRWEKQDILLKTVLAPYITALKDFGDLERILTRFRGNHAYPRDFRSLLNSISSGIKLKEELEKVSYPFLIPIEELKKISDFIQERLHPGDDLPVILGNGIFLKKGFSQKLDQAREAGVKGKDWILDLETKEKKRTGLNTLKIRYNKIVGYFIEISRAQAEQAPKDYLKKQTLVGSERFTMPKLEEIERTILEADEIIQEIERTEFNRMVEEVLKFSSSLLSFSEEIGDLDFQISLLTAKDKFGWIRPKLSEDRSLDLNDSRHPVVEATLPPGQEFIPNSVYLDTQDKAIAVLTGPNMAGKSTFMRQIALNQILFQIGAFVPAKSAKLPIVDKLFTRIGAGDNLTAGESTFFVEMKETANILNHYTEDSLILFDEVGRGTSTYDGMSIAWSILEYLSSLSVRPKTIFATHYHELTELSRLGGIFNLYLETLEKEDRVLFLRKVKVGKAKKSFGIYVAKIAGVPEPIVKRAAELLTDLESKKKEIKIQEAQPTLFTEPETKNFNSQTEESILKLKLEEMTPIEALKTLEDFQKKLRKQK.

605 to 612 (GPNMAGKS) contributes to the ATP binding site.

The protein belongs to the DNA mismatch repair MutS family.

Functionally, this protein is involved in the repair of mismatches in DNA. It is possible that it carries out the mismatch recognition step. This protein has a weak ATPase activity. The polypeptide is DNA mismatch repair protein MutS (Leptospira interrogans serogroup Icterohaemorrhagiae serovar copenhageni (strain Fiocruz L1-130)).